A 498-amino-acid chain; its full sequence is GTPase Der (498 aa).

EngA-type G domains lie at 3-167 (PVVA…FDDL) and 210-383 (IKLA…KSAT). GTP contacts are provided by residues 9–16 (GRPNVGKS), 57–61 (DTGGI), 119–122 (NKID), 216–223 (GRPNVGKS), 263–267 (DTAGV), and 328–331 (NKWD). One can recognise a KH-like domain in the interval 384–468 (TRVGTSVLTR…PIRINFQNSD (85 aa)).

This sequence belongs to the TRAFAC class TrmE-Era-EngA-EngB-Septin-like GTPase superfamily. EngA (Der) GTPase family. In terms of assembly, associates with the 50S ribosomal subunit.

Functionally, GTPase that plays an essential role in the late steps of ribosome biogenesis. This chain is GTPase Der, found in Vibrio campbellii (strain ATCC BAA-1116).